We begin with the raw amino-acid sequence, 175 residues long: Di-N-acetylchitobiase (175 aa).

The signal sequence occupies residues 1-38; the sequence is MARLQLAGSRRLVPLPRRAPRLAPLLLPLLLALPDGAR. Residues 39-175 enclose the GH18 domain; that stretch reads ADCPCKVPAL…SFHHEIKGSQ (137 aa). Asparagine 115 is a glycosylation site (N-linked (GlcNAc...) asparagine). The Proton donor role is filled by glutamate 143.

The protein belongs to the glycosyl hydrolase 18 family.

The protein localises to the lysosome. In terms of biological role, involved in the degradation of asparagine-linked glycoproteins. Hydrolyze of N-acetyl-beta-D-glucosamine (1-4)N-acetylglucosamine chitobiose core from the reducing end of the bond, it requires prior cleavage by glycosylasparaginase. In Bos taurus (Bovine), this protein is Di-N-acetylchitobiase (CTBS).